The sequence spans 404 residues: Aspergillopepsin-1 (404 aa).

An N-terminal signal peptide occupies residues 1 to 20; it reads MVILSKVAAVAVGLSTVASA. Positions 21 to 77 are cleaved as a propeptide — activation peptide; the sequence is LPTGPSHSPHARRGFTINQITRQTARVGPKTASFPAIYSRALAKYGGTVPAHLKSAV. In terms of domain architecture, Peptidase A1 spans 95-401; the sequence is YLTPVNIGGT…DSQGPRLGFA (307 aa). The active site involves D111. N-linked (GlcNAc...) asparagine glycosylation occurs at N140. D293 is an active-site residue. A disulfide bridge links C329 with C364.

The protein belongs to the peptidase A1 family. Monomer.

It is found in the secreted. It catalyses the reaction Hydrolysis of proteins with broad specificity. Generally favors hydrophobic residues in P1 and P1', but also accepts Lys in P1, which leads to activation of trypsinogen. Does not clot milk.. Functionally, secreted aspartic endopeptidase that allows assimilation of proteinaceous substrates. The scissile peptide bond is attacked by a nucleophilic water molecule activated by two aspartic residues in the active site. Shows a broad primary substrate specificity. Favors hydrophobic residues at the P1 and P1' positions, but also accepts a lysine residue in the P1 position, leading to the activation of trypsinogen and chymotrypsinogen A. The chain is Aspergillopepsin-1 (pepA) from Aspergillus flavus (strain ATCC 200026 / FGSC A1120 / IAM 13836 / NRRL 3357 / JCM 12722 / SRRC 167).